The following is a 92-amino-acid chain: Conotoxin Mr15.3 (92 aa).

The first 20 residues, 1 to 20 (MSTLKMMLLILLLLLPMATF), serve as a signal peptide directing secretion. A propeptide spanning residues 21–53 (DSDGQAIPGGGIPSAVNSRVRGDEKSGRSLEKR) is cleaved from the precursor.

Belongs to the conotoxin N superfamily. In terms of processing, contains 4 disulfide bonds. In terms of tissue distribution, expressed by the venom duct.

The protein localises to the secreted. This chain is Conotoxin Mr15.3, found in Conus marmoreus (Marble cone).